Consider the following 508-residue polypeptide: Protein FAM217A (508 aa).

The protein belongs to the FAM217 family.

This chain is Protein FAM217A (FAM217A), found in Homo sapiens (Human).